Consider the following 753-residue polypeptide: 5-methyltetrahydropteroyltriglutamate--homocysteine methyltransferase (753 aa).

Residues 17–20 and Lys117 contribute to the 5-methyltetrahydropteroyltri-L-glutamate site; that span reads RELK. Residues 431–433 and Glu484 each bind L-homocysteine; that span reads IGS. Residues 431–433 and Glu484 each bind L-methionine; that span reads IGS. 5-methyltetrahydropteroyltri-L-glutamate-binding positions include 515–516 and Trp561; that span reads RC. Residue Asp599 participates in L-homocysteine binding. Asp599 contributes to the L-methionine binding site. A 5-methyltetrahydropteroyltri-L-glutamate-binding site is contributed by Glu605. His641, Cys643, and Glu665 together coordinate Zn(2+). The Proton donor role is filled by His694. Cys726 contributes to the Zn(2+) binding site.

It belongs to the vitamin-B12 independent methionine synthase family. Requires Zn(2+) as cofactor.

It catalyses the reaction 5-methyltetrahydropteroyltri-L-glutamate + L-homocysteine = tetrahydropteroyltri-L-glutamate + L-methionine. It functions in the pathway amino-acid biosynthesis; L-methionine biosynthesis via de novo pathway; L-methionine from L-homocysteine (MetE route): step 1/1. In terms of biological role, catalyzes the transfer of a methyl group from 5-methyltetrahydrofolate to homocysteine resulting in methionine formation. This chain is 5-methyltetrahydropteroyltriglutamate--homocysteine methyltransferase, found in Escherichia coli O139:H28 (strain E24377A / ETEC).